Consider the following 391-residue polypeptide: 3-ketoacyl-CoA thiolase (391 aa).

The active-site Acyl-thioester intermediate is C95. Catalysis depends on proton acceptor residues H347 and C377.

The protein belongs to the thiolase-like superfamily. Thiolase family. Heterotetramer of two alpha chains (FadB) and two beta chains (FadA).

The protein resides in the cytoplasm. It carries out the reaction an acyl-CoA + acetyl-CoA = a 3-oxoacyl-CoA + CoA. Its pathway is lipid metabolism; fatty acid beta-oxidation. In terms of biological role, catalyzes the final step of fatty acid oxidation in which acetyl-CoA is released and the CoA ester of a fatty acid two carbons shorter is formed. The chain is 3-ketoacyl-CoA thiolase from Pseudomonas putida (Arthrobacter siderocapsulatus).